Here is a 1435-residue protein sequence, read N- to C-terminus: Guanine nucleotide exchange factor LTE1 (1435 aa).

The 133-residue stretch at 25 to 157 (VSKPVNSADL…SCIINLKKNW (133 aa)) folds into the N-terminal Ras-GEF domain. The segment at 235–256 (KLQSSNSSKNQRSPSMLLFPDN) is disordered. The segment covering 237–249 (QSSNSSKNQRSPS) has biased composition (low complexity). Serine 271 bears the Phosphoserine mark. The disordered stretch occupies residues 338-365 (QSGTLQGTSTTSSLDNNSNSNSRSNTSS). Serine 559 is modified (phosphoserine). Basic and acidic residues predominate over residues 582 to 606 (KDNSSSRTDENGPQRLLFHETDKTN). Residues 582–689 (KDNSSSRTDE…VRNIVNNTDS (108 aa)) are disordered. The span at 621–632 (SQSQKSMTSSPL) shows a compositional bias: polar residues. Residues 654–667 (SITYSYDSELSSSS) are compositionally biased toward low complexity. The residue at position 689 (serine 689) is a Phosphoserine. Threonine 691 carries the phosphothreonine modification. Residues 723-744 (EKNYDNKENQESEYESTKKLDN) show a composition bias toward basic and acidic residues. A disordered region spans residues 723–747 (EKNYDNKENQESEYESTKKLDNSLD). Phosphoserine is present on residues serine 808 and serine 810. Residues 851–871 (AQNSPLKQTQNPQREFPNGTS) form a disordered region. 2 positions are modified to phosphoserine: serine 1028 and serine 1109. Residues 1194-1434 (DSLSVAQQMT…LTQEEINELS (241 aa)) enclose the Ras-GEF domain.

It belongs to the LTE1 family. Interacts with CDC24, CDC42, KEL1, KEL2, RAS2 and TEM1. In terms of processing, phosphorylated by CDC28 in a cell cycle-dependent manner and in response to nocodazole. Dephosphorylion by CDC14 triggers LTE1 release from bud cortex during the exit of mitosis.

Its subcellular location is the cytoplasm. The protein resides in the bud. Its function is as follows. GDP-GTP exchange factor for TEM1, a Ras-like protein, component of the mitotic exit network (MEN). Activation of TEM1 by LTE1 in the bud ultimately leads to activation of CDC15 followed by the release of CDC14 from the nucleolus, which then inactivates cyclin-dependent kinases (CDKs) activity by several mechanism. Required for TEM1 localization to the bud cortex during mitotic exit. Fine-tunes the timing of the mitotic exit and couples this event with cytokinesis. In terms of biological role, involved in proprotein-processing like proalpha factor-processing in the secretory pathway. The protein is Guanine nucleotide exchange factor LTE1 (LTE1) of Saccharomyces cerevisiae (strain ATCC 204508 / S288c) (Baker's yeast).